A 419-amino-acid polypeptide reads, in one-letter code: MGIRLLKMHGYDVDPNALKHFKQEDGKFSCYGGQMIESASPIYNLYRASQLRFPGEEILEEATKFAYNFLQEKIANNQIQEKWVISEHLIDEIKLGLKMPWYATLPRVEAAYYLQYYAGTGDVWIGKTFYRMPEISNDTYKELAVLDFNRCQAQHQFEWIYMQEWYQSSSVKAFGISKKELLLAYFLAAATIFEPERTQERIMWAKTQIVSRMIKSFLSKENTLSLEQKTTLLIDFGHDINGLNKINSVEKGNGLAGTLLTTFQQLLEEFDRYTTHQLKNAWSQWFVKLQQGEGDGGADAELLANTLNICAGHIAFNEDILSHRDYTTLSSLTTKICQRLTQIQDKKILEIKDGSIKDKELEEEMQALVKLVLEENGGGIDRNIKQTFLSVFKTFYYCAYHHAETTDAHIFKVLFEPVV.

Lysine 82 serves as a coordination point for substrate.

This sequence belongs to the terpene synthase family. Tpsc subfamily. The cofactor is Mg(2+). Ubiquitous expression in roots, stems, leaves and flowers.

It is found in the plastid. The protein localises to the chloroplast. It catalyses the reaction (2E,6E,10E)-geranylgeranyl diphosphate = (+)-copalyl diphosphate. It participates in secondary metabolite biosynthesis; terpenoid biosynthesis. In terms of biological role, involved in the biosynthesis of ent-kaurene diterpenoids natural products such as oridonin, miltiradiene, eriocalyxin B and nezukol, known to exhibit antitumor, anti-inflammatory and antibacterial activities. Catalyzes the conversion of (2E,6E,10E)-geranylgeranyl diphosphate (GGPP) to (+)-copalyl diphosphate ((+)-CPP). The protein is Copalyl diphosphate synthase 2, chloroplastic of Isodon rubescens (Rabdosia rubescens).